A 444-amino-acid chain; its full sequence is IMP-specific 5'-nucleotidase 1 (444 aa).

2 residues coordinate ATP: lysine 132 and histidine 150. The active-site Nucleophile is aspartate 170. Residues aspartate 170, aspartate 172, aspartate 178, threonine 204, serine 207, serine 308, aspartate 363, and lysine 371 each coordinate IMP. Residues aspartate 170 and aspartate 172 each contribute to the Mg(2+) site. Catalysis depends on aspartate 172, which acts as the Proton donor. Mg(2+) is bound at residue aspartate 394.

Belongs to the ISN1 family. Homotetramer. It depends on Mg(2+) as a cofactor.

It localises to the cytoplasm. The enzyme catalyses IMP + H2O = inosine + phosphate. With respect to regulation, at physiological pH, allosterically activated by ATP. ATP binding is a prerequisite to magnesium and substrate binding. ATP binds to 2 of the subunits in the homotetramer inducing a closure of these 2 subunits and the release of the C-terminal loop, thereby activating the enzyme. In this conformation, the enzyme can bind IMP and magnesium which ultimately leads to the release of ATP. At pH 5, ATP does not have an allosteric role and is dispensable for magnesium and substrate binding. Inhibited by phosphocholine and D-myo-inositol-4-phosphate. Functionally, specifically, catalyzes the dephosphorylation of inosine monophosphate (IMP) into inosine. By dephosphorylating IMP, plays a role in the purine salvage pathway. Does not have phosphotransferase activity with IMP as phosphate donor and adenosine as phosphate acceptor. The protein is IMP-specific 5'-nucleotidase 1 of Plasmodium falciparum (isolate 3D7).